We begin with the raw amino-acid sequence, 453 residues long: MSKISEVVQRARAAFNSGKTRPLQFRIQQLEALRRMIKEHEKDLAGALTADLHKNEWNAYYEEVVYVLEEIEYMIKKLPEWAADEPVEKTPQTQQDECYIHSEPLGVVLIIGTWNYPFTVTIQPMVGAIAAGNAVVIKPSELSENMANLLATIIPQYLDRDLYPVISGGIPETTELLKERFDHILYTGNTAVGKVIMMAAAKHLTPVTLELGGKNPCYVDKDCDLDIACRRIAWGKFMNSGQTCVAPDYILCDPSIQNQIVEKLKKALKEFYGEDAKKSRDYGRIINSRHFQRVMGLMEGQKVAYGGTGDAATRYIAPTILIDVDTQSQVMQEEIFGPVMPIVCVRSLEEAIQFINQREKPLALYVFSLNDKMIKKMIAETSSGGVTANDVIVHVSVHSLPYGGVGNSGMGSYHGKKSFETFSHCRSCLVRPLLNDESLKTRYPPSLAKMTRH.

Ser-2 carries the N-acetylserine modification. An N6-acetyllysine modification is found at Lys-178. Residue Gly-188–Gly-193 participates in NAD(+) binding. An N6-acetyllysine modification is found at Lys-194. Catalysis depends on residues Glu-210 and Cys-244.

It belongs to the aldehyde dehydrogenase family. In terms of assembly, homodimer.

It localises to the cytoplasm. The catalysed reaction is an aldehyde + NAD(+) + H2O = a carboxylate + NADH + 2 H(+). It catalyses the reaction octanal + NAD(+) + H2O = octanoate + NADH + 2 H(+). Its function is as follows. ALDHs play a major role in the detoxification of alcohol-derived acetaldehyde. They are involved in the metabolism of corticosteroids, biogenic amines, neurotransmitters, and lipid peroxidation. Oxidizes medium and long chain aldehydes into non-toxic fatty acids. Preferentially oxidizes aromatic aldehyde substrates. Comprises about 50 percent of corneal epithelial soluble proteins. May play a role in preventing corneal damage caused by ultraviolet light. The protein is Aldehyde dehydrogenase, dimeric NADP-preferring (ALDH3A1) of Canis lupus familiaris (Dog).